The sequence spans 229 residues: Uracil-DNA glycosylase (229 aa).

Asp-64 serves as the catalytic Proton acceptor.

Belongs to the uracil-DNA glycosylase (UDG) superfamily. UNG family.

The protein localises to the cytoplasm. It catalyses the reaction Hydrolyzes single-stranded DNA or mismatched double-stranded DNA and polynucleotides, releasing free uracil.. Its function is as follows. Excises uracil residues from the DNA which can arise as a result of misincorporation of dUMP residues by DNA polymerase or due to deamination of cytosine. The protein is Uracil-DNA glycosylase of Salmonella arizonae (strain ATCC BAA-731 / CDC346-86 / RSK2980).